Consider the following 120-residue polypeptide: Chaperonin GroEL (120 aa).

D23–T27 provides a ligand contact to ATP.

This sequence belongs to the chaperonin (HSP60) family. As to quaternary structure, forms a cylinder of 14 subunits composed of two heptameric rings stacked back-to-back. Interacts with the co-chaperonin GroES.

It is found in the cytoplasm. It catalyses the reaction ATP + H2O + a folded polypeptide = ADP + phosphate + an unfolded polypeptide.. In terms of biological role, together with its co-chaperonin GroES, plays an essential role in assisting protein folding. The GroEL-GroES system forms a nano-cage that allows encapsulation of the non-native substrate proteins and provides a physical environment optimized to promote and accelerate protein folding. The polypeptide is Chaperonin GroEL (Mycolicibacter nonchromogenicus (Mycobacterium nonchromogenicum)).